We begin with the raw amino-acid sequence, 333 residues long: MPPTINMGIPGASSSVTGGVSGKRVLLAEPRGYCAGVDRAVETVERALEKHGAPVYVRHEIVHNRYVVDTLAKAGAVFVEQTDEVPEGAIVVFSAHGVAPTVHVEAAARNLKTIDATCPLVTKVHNEAKRFARDDYDILLVGHEGHEEVVGTAGEAPDHVQVVDNPDAVDKVTVRDPDKVIWLSQTTLSVDETMETVRRLREKFPTLQDPPSDDICYATQNRQVAVKAMAPECELVIVVGSKNSSNSVRLVEVALGAGSDAAHLVDYAEDIDPTWLDGVTTVGVTSGASVPEVLVRGVLDRLAEYGYGTVQPVTTANETLVFALPREIRPARS.

A [4Fe-4S] cluster-binding site is contributed by Cys34. The (2E)-4-hydroxy-3-methylbut-2-enyl diphosphate site is built by His63 and His96. The dimethylallyl diphosphate site is built by His63 and His96. Isopentenyl diphosphate-binding residues include His63 and His96. Cys118 contacts [4Fe-4S] cluster. A (2E)-4-hydroxy-3-methylbut-2-enyl diphosphate-binding site is contributed by His146. His146 is a dimethylallyl diphosphate binding site. Residue His146 participates in isopentenyl diphosphate binding. Glu148 acts as the Proton donor in catalysis. Thr186 contacts (2E)-4-hydroxy-3-methylbut-2-enyl diphosphate. Residue Cys216 participates in [4Fe-4S] cluster binding. (2E)-4-hydroxy-3-methylbut-2-enyl diphosphate-binding residues include Ser244, Ser245, Asn246, and Ser289. Dimethylallyl diphosphate contacts are provided by Ser244, Ser245, Asn246, and Ser289. Residues Ser244, Ser245, Asn246, and Ser289 each coordinate isopentenyl diphosphate.

The protein belongs to the IspH family. [4Fe-4S] cluster serves as cofactor.

It carries out the reaction isopentenyl diphosphate + 2 oxidized [2Fe-2S]-[ferredoxin] + H2O = (2E)-4-hydroxy-3-methylbut-2-enyl diphosphate + 2 reduced [2Fe-2S]-[ferredoxin] + 2 H(+). The enzyme catalyses dimethylallyl diphosphate + 2 oxidized [2Fe-2S]-[ferredoxin] + H2O = (2E)-4-hydroxy-3-methylbut-2-enyl diphosphate + 2 reduced [2Fe-2S]-[ferredoxin] + 2 H(+). The protein operates within isoprenoid biosynthesis; dimethylallyl diphosphate biosynthesis; dimethylallyl diphosphate from (2E)-4-hydroxy-3-methylbutenyl diphosphate: step 1/1. Its pathway is isoprenoid biosynthesis; isopentenyl diphosphate biosynthesis via DXP pathway; isopentenyl diphosphate from 1-deoxy-D-xylulose 5-phosphate: step 6/6. Catalyzes the conversion of 1-hydroxy-2-methyl-2-(E)-butenyl 4-diphosphate (HMBPP) into a mixture of isopentenyl diphosphate (IPP) and dimethylallyl diphosphate (DMAPP). Acts in the terminal step of the DOXP/MEP pathway for isoprenoid precursor biosynthesis. This chain is 4-hydroxy-3-methylbut-2-enyl diphosphate reductase, found in Mycobacterium sp. (strain JLS).